Reading from the N-terminus, the 132-residue chain is NADPH-dependent 7-cyano-7-deazaguanine reductase (132 aa).

Cys34 functions as the Thioimide intermediate in the catalytic mechanism. Asp41 acts as the Proton donor in catalysis. Substrate-binding positions include 56–58 and 75–76; these read IEL and HE.

The protein belongs to the GTP cyclohydrolase I family. QueF type 1 subfamily.

It is found in the cytoplasm. The catalysed reaction is 7-aminomethyl-7-carbaguanine + 2 NADP(+) = 7-cyano-7-deazaguanine + 2 NADPH + 3 H(+). Its pathway is tRNA modification; tRNA-queuosine biosynthesis. Functionally, catalyzes the NADPH-dependent reduction of 7-cyano-7-deazaguanine (preQ0) to 7-aminomethyl-7-deazaguanine (preQ1). This chain is NADPH-dependent 7-cyano-7-deazaguanine reductase, found in Vesicomyosocius okutanii subsp. Calyptogena okutanii (strain HA).